The sequence spans 387 residues: ATP phosphoribosyltransferase regulatory subunit (387 aa).

Belongs to the class-II aminoacyl-tRNA synthetase family. HisZ subfamily. In terms of assembly, heteromultimer composed of HisG and HisZ subunits.

It is found in the cytoplasm. The protein operates within amino-acid biosynthesis; L-histidine biosynthesis; L-histidine from 5-phospho-alpha-D-ribose 1-diphosphate: step 1/9. Functionally, required for the first step of histidine biosynthesis. May allow the feedback regulation of ATP phosphoribosyltransferase activity by histidine. This is ATP phosphoribosyltransferase regulatory subunit from Polynucleobacter asymbioticus (strain DSM 18221 / CIP 109841 / QLW-P1DMWA-1) (Polynucleobacter necessarius subsp. asymbioticus).